The primary structure comprises 267 residues: Phosphate import ATP-binding protein PstB 1 (267 aa).

The 242-residue stretch at 21-262 folds into the ABC transporter domain; the sequence is LETKDLHVYY…AALQSTSDYV (242 aa). Position 53–60 (53–60) interacts with ATP; it reads GPSGCGKS.

The protein belongs to the ABC transporter superfamily. Phosphate importer (TC 3.A.1.7) family. In terms of assembly, the complex is composed of two ATP-binding proteins (PstB), two transmembrane proteins (PstC and PstA) and a solute-binding protein (PstS).

The protein localises to the cell membrane. The enzyme catalyses phosphate(out) + ATP + H2O = ADP + 2 phosphate(in) + H(+). Functionally, part of the ABC transporter complex PstSACB involved in phosphate import. Responsible for energy coupling to the transport system. The protein is Phosphate import ATP-binding protein PstB 1 of Streptococcus thermophilus (strain CNRZ 1066).